The primary structure comprises 145 residues: MTKKYLKVDVVSPLGSVFKGEADMVSLRGSAGEMGIVYGHTELLSTLPAGVVNVRKGQHTDVLYVSGGIVEVTPTRVTIMVDDMERAENLNQAEAEKARARAKEVLKNPDASKLDIEAANKRLKEADARLKALNSSNGLYYSKDD.

This sequence belongs to the ATPase epsilon chain family. In terms of assembly, F-type ATPases have 2 components, CF(1) - the catalytic core - and CF(0) - the membrane proton channel. CF(1) has five subunits: alpha(3), beta(3), gamma(1), delta(1), epsilon(1). CF(0) has three main subunits: a, b and c.

The protein localises to the cell inner membrane. Functionally, produces ATP from ADP in the presence of a proton gradient across the membrane. This chain is ATP synthase epsilon chain, found in Francisella tularensis subsp. holarctica (strain FTNF002-00 / FTA).